The primary structure comprises 31 residues: Dermaseptin-7.2TR (31 aa).

E31 bears the Glutamic acid 1-amide mark.

As to expression, expressed by the skin glands.

It is found in the secreted. Functionally, has antimicrobial activity. The chain is Dermaseptin-7.2TR from Phyllomedusa trinitatis (Trinidad leaf frog).